The sequence spans 480 residues: Aspartyl/glutamyl-tRNA(Asn/Gln) amidotransferase subunit B (480 aa).

It belongs to the GatB/GatE family. GatB subfamily. In terms of assembly, heterotrimer of A, B and C subunits.

It carries out the reaction L-glutamyl-tRNA(Gln) + L-glutamine + ATP + H2O = L-glutaminyl-tRNA(Gln) + L-glutamate + ADP + phosphate + H(+). The catalysed reaction is L-aspartyl-tRNA(Asn) + L-glutamine + ATP + H2O = L-asparaginyl-tRNA(Asn) + L-glutamate + ADP + phosphate + 2 H(+). Allows the formation of correctly charged Asn-tRNA(Asn) or Gln-tRNA(Gln) through the transamidation of misacylated Asp-tRNA(Asn) or Glu-tRNA(Gln) in organisms which lack either or both of asparaginyl-tRNA or glutaminyl-tRNA synthetases. The reaction takes place in the presence of glutamine and ATP through an activated phospho-Asp-tRNA(Asn) or phospho-Glu-tRNA(Gln). The protein is Aspartyl/glutamyl-tRNA(Asn/Gln) amidotransferase subunit B of Streptococcus agalactiae serotype III (strain NEM316).